The following is a 217-amino-acid chain: Adenosylcobinamide-GDP ribazoletransferase (217 aa).

5 helical membrane-spanning segments follow: residues 6–26 (ALLS…FKCA), 39–61 (GPAA…LLLM), 95–115 (GTGG…STAS), 116–136 (PLQL…VAAF), and 162–182 (ALAV…AVAL).

It belongs to the CobS family. Requires Mg(2+) as cofactor.

It localises to the cell membrane. It catalyses the reaction alpha-ribazole + adenosylcob(III)inamide-GDP = adenosylcob(III)alamin + GMP + H(+). The enzyme catalyses alpha-ribazole 5'-phosphate + adenosylcob(III)inamide-GDP = adenosylcob(III)alamin 5'-phosphate + GMP + H(+). The protein operates within cofactor biosynthesis; adenosylcobalamin biosynthesis; adenosylcobalamin from cob(II)yrinate a,c-diamide: step 7/7. Functionally, joins adenosylcobinamide-GDP and alpha-ribazole to generate adenosylcobalamin (Ado-cobalamin). Also synthesizes adenosylcobalamin 5'-phosphate from adenosylcobinamide-GDP and alpha-ribazole 5'-phosphate. This Pyrobaculum calidifontis (strain DSM 21063 / JCM 11548 / VA1) protein is Adenosylcobinamide-GDP ribazoletransferase.